The primary structure comprises 202 residues: B-cell CLL/lymphoma 7 protein family member B (202 aa).

A disordered region spans residues 53 to 202; it reads DSKEKEKSKS…PTVPQTASES (150 aa). Polar residues predominate over residues 90 to 99; that stretch reads ENSNQSSVSD. Low complexity predominate over residues 107–123; it reads SSTNSSPSPQQSESLSP. Phosphoserine is present on residues Ser114, Ser118, Ser120, Ser122, Ser127, Ser148, and Ser152.

This sequence belongs to the BCL7 family. As to expression, ubiquitous.

Its function is as follows. Positive regulator of apoptosis. Plays a role in the Wnt signaling pathway, negatively regulating the expression of Wnt signaling components CTNNB1 and HMGA1. Involved in cell cycle progression, maintenance of the nuclear structure and stem cell differentiation. May play a role in lung tumor development or progression. In Homo sapiens (Human), this protein is B-cell CLL/lymphoma 7 protein family member B (BCL7B).